Reading from the N-terminus, the 343-residue chain is Dihydroorotase (343 aa).

The Zn(2+) site is built by H14 and H16. Residues 16-18 and N42 each bind substrate; that span reads HVR. K98, H135, and H173 together coordinate Zn(2+). Position 98 is an N6-carboxylysine (K98). Residue H135 coordinates substrate. L219 contributes to the substrate binding site. D247 contributes to the Zn(2+) binding site. D247 is an active-site residue. Substrate is bound by residues H251 and A263.

This sequence belongs to the metallo-dependent hydrolases superfamily. DHOase family. Class II DHOase subfamily. In terms of assembly, homodimer. Requires Zn(2+) as cofactor.

The enzyme catalyses (S)-dihydroorotate + H2O = N-carbamoyl-L-aspartate + H(+). Its pathway is pyrimidine metabolism; UMP biosynthesis via de novo pathway; (S)-dihydroorotate from bicarbonate: step 3/3. Catalyzes the reversible cyclization of carbamoyl aspartate to dihydroorotate. The sequence is that of Dihydroorotase from Marinobacter nauticus (strain ATCC 700491 / DSM 11845 / VT8) (Marinobacter aquaeolei).